The chain runs to 219 residues: Ras-related protein Rab-3B (219 aa).

Position 2 is an N-acetylalanine (alanine 2). GTP-binding residues include serine 31, serine 32, valine 33, glycine 34, lysine 35, threonine 36, serine 37, proline 49, and serine 53. Residue threonine 36 participates in Mg(2+) binding. A Switch 1 motif is present at residues 45–58 (DTFTPAFVSTVGID). Threonine 54 and aspartate 77 together coordinate Mg(2+). The Switch 2 motif lies at 78 to 96 (TAGQERYRTITTAYYRGAM). Glycine 80 serves as a coordination point for GTP. Threonine 86 carries the phosphothreonine modification. Residues asparagine 135, lysine 136, aspartate 138, alanine 166, and lysine 167 each coordinate GTP. Residues serine 188 and serine 190 each carry the phosphoserine modification. 2 S-geranylgeranyl cysteine lipidation sites follow: cysteine 217 and cysteine 219. Cysteine 219 carries the post-translational modification Cysteine methyl ester.

The protein belongs to the small GTPase superfamily. Rab family. Interacts with RIMS1, RIMS2, RPH3A and RPH3AL. The GTP-bound form interacts with GAS8/DRC4 (via coiled-coil domains). Interacts with GDI2, CHM and CHML; phosphorylation at Thr-86 disrupts these interactions. Interacts with MADD (via uDENN domain); the GTP-bound form is preferred for interaction. Mg(2+) is required as a cofactor. Phosphorylation of Thr-86 in the switch II region by LRRK2 prevents the association of RAB regulatory proteins, including CHM, CHML and RAB GDP dissociation inhibitor GDI2.

The protein resides in the cell membrane. It is found in the golgi apparatus. It catalyses the reaction GTP + H2O = GDP + phosphate + H(+). Regulated by guanine nucleotide exchange factors (GEFs) which promote the exchange of bound GDP for free GTP. Regulated by GTPase activating proteins (GAPs) which increase the GTP hydrolysis activity. Inhibited by GDP dissociation inhibitors (GDIs) which prevent Rab-GDP dissociation. The small GTPases Rab are key regulators of intracellular membrane trafficking, from the formation of transport vesicles to their fusion with membranes. Rabs cycle between an inactive GDP-bound form and an active GTP-bound form that is able to recruit to membranes different sets of downstream effectors directly responsible for vesicle formation, movement, tethering and fusion. The polypeptide is Ras-related protein Rab-3B (RAB3B) (Mesocricetus auratus (Golden hamster)).